The primary structure comprises 151 residues: Chaperonin GroEL (151 aa).

41–45 (DGTTT) serves as a coordination point for ATP.

Belongs to the chaperonin (HSP60) family. As to quaternary structure, forms a cylinder of 14 subunits composed of two heptameric rings stacked back-to-back. Interacts with the co-chaperonin GroES.

The protein resides in the cytoplasm. It catalyses the reaction ATP + H2O + a folded polypeptide = ADP + phosphate + an unfolded polypeptide.. Its function is as follows. Together with its co-chaperonin GroES, plays an essential role in assisting protein folding. The GroEL-GroES system forms a nano-cage that allows encapsulation of the non-native substrate proteins and provides a physical environment optimized to promote and accelerate protein folding. This chain is Chaperonin GroEL, found in Mycobacterium avium.